We begin with the raw amino-acid sequence, 442 residues long: Dihydrolipoyllysine-residue acetyltransferase component of pyruvate dehydrogenase complex (442 aa).

A Lipoyl-binding domain is found at 2–77 (AFEFKLPDIG…TVGQTIITFD (76 aa)). Lys-43 carries the N6-lipoyllysine modification. The span at 84-97 (LQFKGSDESDDAKT) shows a compositional bias: basic and acidic residues. The disordered stretch occupies residues 84–136 (LQFKGSDESDDAKTEAQVQSTAEAGQDVAKEEQAQEPAKATGAGQQDQAEVDP). Positions 141–178 (IAMPSVRKYAREKGVDIRKVTGSGNNGRVVKEDIDSFV) constitute a Peripheral subunit-binding (PSBD) domain. The span at 182 to 208 (AQEAAPQETAAPQETAAKPAAAPAPEG) shows a compositional bias: low complexity. Positions 182-215 (AQEAAPQETAAPQETAAKPAAAPAPEGEFPETRE) are disordered. The active site involves His-413.

Belongs to the 2-oxoacid dehydrogenase family. Forms a 24-polypeptide structural core with octahedral symmetry. Requires (R)-lipoate as cofactor.

It catalyses the reaction N(6)-[(R)-dihydrolipoyl]-L-lysyl-[protein] + acetyl-CoA = N(6)-[(R)-S(8)-acetyldihydrolipoyl]-L-lysyl-[protein] + CoA. The pyruvate dehydrogenase complex catalyzes the overall conversion of pyruvate to acetyl-CoA and CO(2). It contains multiple copies of three enzymatic components: pyruvate dehydrogenase (E1), dihydrolipoamide acetyltransferase (E2) and lipoamide dehydrogenase (E3). In terms of biological role, the B.subtilis PDH complex also possesses branched-chain 2-oxoacid dehydrogenase (BCDH) activity. The polypeptide is Dihydrolipoyllysine-residue acetyltransferase component of pyruvate dehydrogenase complex (pdhC) (Bacillus subtilis (strain 168)).